Here is a 358-residue protein sequence, read N- to C-terminus: Peptide chain release factor 1 (358 aa).

At Gln-233 the chain carries N5-methylglutamine.

The protein belongs to the prokaryotic/mitochondrial release factor family. Methylated by PrmC. Methylation increases the termination efficiency of RF1.

The protein localises to the cytoplasm. Its function is as follows. Peptide chain release factor 1 directs the termination of translation in response to the peptide chain termination codons UAG and UAA. This chain is Peptide chain release factor 1, found in Clostridium botulinum (strain ATCC 19397 / Type A).